Reading from the N-terminus, the 45-residue chain is MEGGMAAYPVATRESRCRRGRIGVQPSPERRSEVVGPFPLARSLS.

Residues 18–45 (RRGRIGVQPSPERRSEVVGPFPLARSLS) are disordered.

This is an uncharacterized protein from Homo sapiens (Human).